The sequence spans 906 residues: Aconitate hydratase A (906 aa).

A propeptide spanning residues 1 to 2 (MS) is cleaved from the precursor. Positions 441, 507, and 510 each coordinate [4Fe-4S] cluster.

It belongs to the aconitase/IPM isomerase family. As to quaternary structure, monomer. [4Fe-4S] cluster is required as a cofactor.

It catalyses the reaction citrate = D-threo-isocitrate. The catalysed reaction is (2S,3R)-3-hydroxybutane-1,2,3-tricarboxylate = 2-methyl-cis-aconitate + H2O. It participates in carbohydrate metabolism; tricarboxylic acid cycle; isocitrate from oxaloacetate: step 2/2. The protein operates within organic acid metabolism; propanoate degradation. Involved in the catabolism of short chain fatty acids (SCFA) via the tricarboxylic acid (TCA)(acetyl degradation route) and probably the 2-methylcitrate cycle I (propionate degradation route). Catalyzes the reversible isomerization of citrate to isocitrate via cis-aconitate. Could catalyze the hydration of 2-methyl-cis-aconitate to yield (2R,3S)-2-methylisocitrate. The apo form of AcnA functions as a RNA-binding regulatory protein. The sequence is that of Aconitate hydratase A (acn) from Deinococcus radiodurans (strain ATCC 13939 / DSM 20539 / JCM 16871 / CCUG 27074 / LMG 4051 / NBRC 15346 / NCIMB 9279 / VKM B-1422 / R1).